Reading from the N-terminus, the 643-residue chain is Alpha-dioxygenase PIOX (643 aa).

The active-site Proton acceptor is the histidine 168. Aspartate 169 provides a ligand contact to Ca(2+). Histidine 173 lines the heme b pocket. Ca(2+) contacts are provided by threonine 221, tryptophan 223, aspartate 225, and serine 227. 3 residues coordinate heme b: histidine 393, arginine 490, and arginine 494.

This sequence belongs to the peroxidase family. Requires heme b as cofactor. Ca(2+) serves as cofactor.

It catalyses the reaction hexadecanoate + O2 = (2R)-2-hydroperoxyhexadecanoate. It carries out the reaction dodecanoate + O2 = (2R)-2-hydroperoxydodecanoate. In terms of biological role, alpha-dioxygenase that catalyzes the primary oxygenation step of a variety of 14-20 carbon fatty acids, containing up to three unsaturated bonds, into their corresponding 2R-hydroperoxides. Involved in the production of oxylipins that function in cell signaling, wound healing, and protection from infection. The alpha-oxidation pathway of fatty acids may play a role during plant developmental processes. This Pisum sativum (Garden pea) protein is Alpha-dioxygenase PIOX.